Here is a 413-residue protein sequence, read N- to C-terminus: Multifunctional CCA protein (413 aa).

Gly-8 and Arg-11 together coordinate ATP. Residues Gly-8 and Arg-11 each contribute to the CTP site. Asp-21 and Asp-23 together coordinate Mg(2+). The ATP site is built by Arg-91, Arg-137, and Arg-140. CTP is bound by residues Arg-91, Arg-137, and Arg-140. The region spanning 228–329 (TGVHTLMTLS…VKLFDAIDAW (102 aa)) is the HD domain.

It belongs to the tRNA nucleotidyltransferase/poly(A) polymerase family. Bacterial CCA-adding enzyme type 1 subfamily. In terms of assembly, monomer. Can also form homodimers and oligomers. The cofactor is Mg(2+). It depends on Ni(2+) as a cofactor.

The enzyme catalyses a tRNA precursor + 2 CTP + ATP = a tRNA with a 3' CCA end + 3 diphosphate. The catalysed reaction is a tRNA with a 3' CCA end + 2 CTP + ATP = a tRNA with a 3' CCACCA end + 3 diphosphate. Functionally, catalyzes the addition and repair of the essential 3'-terminal CCA sequence in tRNAs without using a nucleic acid template. Adds these three nucleotides in the order of C, C, and A to the tRNA nucleotide-73, using CTP and ATP as substrates and producing inorganic pyrophosphate. tRNA 3'-terminal CCA addition is required both for tRNA processing and repair. Also involved in tRNA surveillance by mediating tandem CCA addition to generate a CCACCA at the 3' terminus of unstable tRNAs. While stable tRNAs receive only 3'-terminal CCA, unstable tRNAs are marked with CCACCA and rapidly degraded. This Salmonella choleraesuis (strain SC-B67) protein is Multifunctional CCA protein.